A 246-amino-acid chain; its full sequence is Proteasome subunit alpha (246 aa).

The protein belongs to the peptidase T1A family. As to quaternary structure, the 20S proteasome core is composed of 14 alpha and 14 beta subunits that assemble into four stacked heptameric rings, resulting in a barrel-shaped structure. The two inner rings, each composed of seven catalytic beta subunits, are sandwiched by two outer rings, each composed of seven alpha subunits. The catalytic chamber with the active sites is on the inside of the barrel. Has probably a gated structure, the ends of the cylinder being occluded by the N-termini of the alpha-subunits. Is likely capped at one or both ends by the proteasome regulatory ATPase, PAN.

The protein resides in the cytoplasm. Its activity is regulated as follows. The formation of the proteasomal ATPase PAN-20S proteasome complex, via the docking of the C-termini of PAN into the intersubunit pockets in the alpha-rings, triggers opening of the gate for substrate entry. Interconversion between the open-gate and close-gate conformations leads to a dynamic regulation of the 20S proteasome proteolysis activity. Its function is as follows. Component of the proteasome core, a large protease complex with broad specificity involved in protein degradation. In Archaeoglobus fulgidus (strain ATCC 49558 / DSM 4304 / JCM 9628 / NBRC 100126 / VC-16), this protein is Proteasome subunit alpha.